A 156-amino-acid polypeptide reads, in one-letter code: Small ribosomal subunit protein uS7 (156 aa).

It belongs to the universal ribosomal protein uS7 family. As to quaternary structure, part of the 30S ribosomal subunit. Contacts proteins S9 and S11.

In terms of biological role, one of the primary rRNA binding proteins, it binds directly to 16S rRNA where it nucleates assembly of the head domain of the 30S subunit. Is located at the subunit interface close to the decoding center, probably blocks exit of the E-site tRNA. The polypeptide is Small ribosomal subunit protein uS7 (Gloeothece citriformis (strain PCC 7424) (Cyanothece sp. (strain PCC 7424))).